A 310-amino-acid polypeptide reads, in one-letter code: Methionyl-tRNA formyltransferase (310 aa).

109-112 (SLLP) contributes to the (6S)-5,6,7,8-tetrahydrofolate binding site.

It belongs to the Fmt family.

It carries out the reaction L-methionyl-tRNA(fMet) + (6R)-10-formyltetrahydrofolate = N-formyl-L-methionyl-tRNA(fMet) + (6S)-5,6,7,8-tetrahydrofolate + H(+). Its function is as follows. Attaches a formyl group to the free amino group of methionyl-tRNA(fMet). The formyl group appears to play a dual role in the initiator identity of N-formylmethionyl-tRNA by promoting its recognition by IF2 and preventing the misappropriation of this tRNA by the elongation apparatus. This Pseudomonas putida (strain ATCC 47054 / DSM 6125 / CFBP 8728 / NCIMB 11950 / KT2440) protein is Methionyl-tRNA formyltransferase.